We begin with the raw amino-acid sequence, 183 residues long: MDGIIPVVEKKDFLRWFLKEFTLKKRECSWLLNYLMSDDDLMENVHFVEEAERCPKALIMSTNDVHTVPFCFHKYQQVTMDAEKAFHDIRMNPEEAIYIQLHFSGAKHNPNYIAVLEDNPYVPENEDLIAKQKKLAEAFLERSVQSFEEKELLRRIDEALDARDKETFLTLSQQLQHLRQHSD.

The protein belongs to the UPF0302 family.

This chain is UPF0302 protein BH1670, found in Halalkalibacterium halodurans (strain ATCC BAA-125 / DSM 18197 / FERM 7344 / JCM 9153 / C-125) (Bacillus halodurans).